Here is a 278-residue protein sequence, read N- to C-terminus: MAATKRAACLIGWPAAHSRSPLIHHYWLRRLGIEGGYSIEAVPPEGFAEFVLHLKTHGYVGANVTIPHKERALQLTEPDERARAVGAANTLYYDGDLLRSTNTDIEGFIGNLDASAPGWDRSPHAVVLGAGGSSRAVVFGLLERGVQRIALANRSIERAQALRDLFGERVVPIAWSDIPAALPGAGLLVNTTSLGMKGQPPLQIDLSALPADAVVSDLVYVPLETDLLAAAKARGLRTADGLGMLLHQAVRGFDLWFGARPHVTAELRALVEADLAPK.

Residues 18–20 (SRS) and Thr65 contribute to the shikimate site. Catalysis depends on Lys69, which acts as the Proton acceptor. An NADP(+)-binding site is contributed by Glu80. Shikimate contacts are provided by Asn89 and Asp104. NADP(+) is bound by residues 129 to 133 (GAGGS) and Leu218. Tyr220 is a binding site for shikimate. NADP(+) is bound at residue Gly241.

Belongs to the shikimate dehydrogenase family. As to quaternary structure, homodimer.

It carries out the reaction shikimate + NADP(+) = 3-dehydroshikimate + NADPH + H(+). It participates in metabolic intermediate biosynthesis; chorismate biosynthesis; chorismate from D-erythrose 4-phosphate and phosphoenolpyruvate: step 4/7. Functionally, involved in the biosynthesis of the chorismate, which leads to the biosynthesis of aromatic amino acids. Catalyzes the reversible NADPH linked reduction of 3-dehydroshikimate (DHSA) to yield shikimate (SA). The sequence is that of Shikimate dehydrogenase (NADP(+)) from Rhodopseudomonas palustris (strain TIE-1).